We begin with the raw amino-acid sequence, 440 residues long: Muscarinic acetylcholine receptor M2 (440 aa).

The helical transmembrane segment at 1–19 (VLVAGSLSLVTIIGNILVM) threads the bilayer. At 20-33 (VSIKVNRHLQTVNN) the chain is on the cytoplasmic side. A helical transmembrane segment spans residues 34–54 (YFLFSLACADLIIGVFSMNLY). Topologically, residues 55 to 71 (TLYTVIGYWPLGPVVCD) are extracellular. A disulfide bridge connects residues C70 and C150. Residues 72–93 (LWLALDYVVSNASVMNLLIISF) traverse the membrane as a helical segment. Positions 94–96 (DRY) match the Important for signaling motif. The Cytoplasmic portion of the chain corresponds to 94-113 (DRYFCVTKPLTYPVKRTTKM). A helical membrane pass occupies residues 114 to 136 (AGMMIAAAWVLSFILWAPAILFW). Over 137-158 (QFIVGVRTVEDGECYIQFFSNA) the chain is Extracellular. A helical transmembrane segment spans residues 159 to 183 (AVTFGTAIAAFYLPVIIMTVLYWHI). Residues 184–361 (SRASKSRIKK…PPSREKKVTR (178 aa)) lie on the Cytoplasmic side of the membrane. The interval 192 to 329 (KKDKKEPVAN…VVGSSGQNGD (138 aa)) is disordered. S206 carries the post-translational modification Phosphoserine. Residues 228–244 (GLEHNKIQNGKAPRDPV) are compositionally biased toward basic and acidic residues. 3 stretches are compositionally biased toward polar residues: residues 258–267 (NDSTSVSAVA), 278–287 (DENTVSTSLG), and 308–327 (SDSC…SGQN). The chain crosses the membrane as a helical span at residues 362–384 (TILAILLAFIITWAPYNVMVLIN). Residues 385–392 (TFCAPCIP) lie on the Extracellular side of the membrane. C387 and C390 form a disulfide bridge. A helical transmembrane segment spans residues 393-416 (NTVWTIGYWLCYINSTINPACYAL). Residues 410–414 (NPACY) carry the Important for signaling motif. At 417 to 440 (CNATFKKTFKHLLMCHYKNIGATR) the chain is on the cytoplasmic side. Residues T420, T424, and T439 each carry the phosphothreonine modification.

Belongs to the G-protein coupled receptor 1 family. Muscarinic acetylcholine receptor subfamily. CHRM2 sub-subfamily. As to quaternary structure, interacts with ARRB1 and ARRB2. Interacts with RACK1; the interaction regulates CHRM2 internalization. In terms of processing, phosphorylated in response to agonist treatment.

It localises to the cell membrane. It is found in the postsynaptic cell membrane. Functionally, the muscarinic acetylcholine receptor mediates various cellular responses, including inhibition of adenylate cyclase, breakdown of phosphoinositides and modulation of potassium channels through the action of G proteins. Primary transducing effect is adenylate cyclase inhibition. Signaling promotes phospholipase C activity, leading to the release of inositol trisphosphate (IP3); this then triggers calcium ion release into the cytosol. This is Muscarinic acetylcholine receptor M2 (CHRM2) from Pan troglodytes (Chimpanzee).